A 371-amino-acid chain; its full sequence is MNHLGVFETRFRPRTRHKSQRAQLIPEQITMRTAVLLPLLALLAVAQAVSFADVVMEEWHTFKLEHRKNYQDETEERFRLKIFNENKHKIAKHNQRFAEGKVSFKLAVNKYADLLHHEFRQLMNGFNYTLHKQLRAADESFKGVTFISPAHVTLPKSVDWRTKGAVTAVKDQGHCGSCWAFSSTGALEGQHFRKSGVLVSLSEQNLVDCSTKYGNNGCNGGLMDNAFRYIKDNGGIDTEKSYPYEAIDDSCHFNKGTVGATDRGFTDIPQGDEKKMAEAVATVGPVSVAIDASHESFQFYSEGVYNEPQCDAQNLDHGVLVVGFGTDESGEDYWLVKNSWGTTWGDKGFIKMLRNKENQCGIASASSYPLV.

The first 48 residues, 1–48, serve as a signal peptide directing secretion; sequence MNHLGVFETRFRPRTRHKSQRAQLIPEQITMRTAVLLPLLALLAVAQA. Positions 49 to 153 are cleaved as a propeptide — activation peptide; the sequence is VSFADVVMEE…VTFISPAHVT (105 aa). N-linked (GlcNAc...) asparagine glycosylation occurs at asparagine 127. 3 disulfides stabilise this stretch: cysteine 175–cysteine 218, cysteine 209–cysteine 251, and cysteine 310–cysteine 360. Residue cysteine 178 is part of the active site. Residue histidine 317 is part of the active site. Residues 327–329 constitute a propeptide that is removed on maturation; the sequence is DES. Asparagine 338 is a catalytic residue.

This sequence belongs to the peptidase C1 family. In terms of assembly, dimer of a heavy and a light chain linked by disulfide bonds. In the embryo, predominantly expressed in the midgut. Also expressed in larval alimentary organs such as salivary gland and midgut including gastric caeca.

Its subcellular location is the lysosome. It catalyses the reaction Specificity close to that of papain. As compared to cathepsin B, cathepsin L exhibits higher activity toward protein substrates, but has little activity on Z-Arg-Arg-NHMec, and no peptidyl-dipeptidase activity.. In terms of biological role, important for the overall degradation of proteins in lysosomes. Essential for adult male and female fertility. May play a role in digestion. The protein is Cathepsin L1 of Drosophila melanogaster (Fruit fly).